The chain runs to 77 residues: Small, acid-soluble spore protein Tlp (77 aa).

This sequence belongs to the Tlp family.

The protein resides in the spore core. This is Small, acid-soluble spore protein Tlp from Geobacillus sp. (strain WCH70).